The primary structure comprises 81 residues: Small ribosomal subunit protein bS16 (81 aa).

The protein belongs to the bacterial ribosomal protein bS16 family.

In Agathobacter rectalis (strain ATCC 33656 / DSM 3377 / JCM 17463 / KCTC 5835 / VPI 0990) (Eubacterium rectale), this protein is Small ribosomal subunit protein bS16.